The primary structure comprises 10746 residues: Extracellular matrix-binding protein ebh (10746 aa).

An N-terminal signal peptide occupies residues 1–39 (MNYRDKIQKFSIRKYTVGTFSTVIATLVFLGLNTSQAQA). 2 stretches are compositionally biased toward polar residues: residues 41–59 (ETNQ…GDTQ) and 67–113 (VQNS…SQNE). Disordered stretches follow at residues 41–174 (ETNQ…GNVQ), 246–274 (MPQR…PRSV), and 1340–1372 (IAGN…DGQR). Over residues 120 to 130 (AAATPTQSAKA) the composition is skewed to low complexity. The segment covering 132–158 (SKHEQSESRAANKKENDNKATHVESHE) has biased composition (basic and acidic residues). The span at 162–173 (VTASDSSDSGNV) shows a compositional bias: polar residues. A compositionally biased stretch (low complexity) spans 248–263 (QRQQTSRRSSRIQTRS). Over residues 1356 to 1372 (YKTTGYSQSNPTSDGQR) the composition is skewed to polar residues. FIVAR domains lie at 2520–2576 (AKNH…VNAA), 2606–2662 (SKNN…ISDE), 2683–2746 (DTHE…VQTA), 2776–2832 (AKTK…IAAK), 2860–2915 (AKTQ…IRQN), 2943–2998 (AKNQ…INTN), 3026–3081 (AKTQ…INDK), 3150–3208 (AMTK…VNQK), 3276–3335 (AMTG…VNNA), 3403–3461 (AMGN…VNSA), 3529–3587 (AMGN…VTEA), 3655–3713 (AMNT…ITQK), 3781–3839 (AMAS…VEAA), 3907–3965 (AMGN…VEQA), 4033–4091 (AMGQ…VTAA), 4159–4217 (AMKG…ITQA), 4285–4343 (QMGN…VEAA), 4411–4469 (AMAN…VENA), 4537–4595 (AMGT…INQI), 4663–4721 (AMGQ…VDRA), 4789–4847 (AMNS…VDNA), 4915–4973 (AMGA…INGM), 5041–5099 (AMTV…VNSA), 5167–5225 (AMKG…ITQA), 5293–5351 (AMHS…VEQA), 5419–5477 (AMGQ…VERA), 5545–5603 (AMTA…VTNA), 5671–5729 (AMKG…INQA), 5797–5855 (AMTN…VESA), 5923–5981 (AMSN…VEQA), 6049–6107 (AMNQ…INQK), 6175–6232 (AMGN…VQAA), 6300–6358 (AMGQ…VEAA), 6426–6484 (AMQR…VEQA), 6552–6610 (AMDQ…VTAA), 6678–6736 (AMNQ…VTQA), 6804–6862 (AMER…VEAA), 6930–6988 (AMGN…VEAA), 7056–7114 (AMDK…INQA), 7182–7240 (AMGN…VEQA), 7308–7366 (AMTQ…ITAA), 7434–7492 (AMTQ…IQQA), 7560–7618 (AMTN…VEQA), 7686–7744 (AMTQ…VAQA), 7812–7870 (AMGT…VTQA), 7938–7996 (AMSN…ITRA), 8064–8125 (AMDQ…ITNE), 8190–8251 (AMDQ…ITNE), 8316–8374 (AMEL…VNRA), 8442–8500 (AMGN…VEQA), 8568–8625 (AMHG…INQA), 8693–8751 (LMDA…VTSA), 8819–8877 (AMKA…IDQA), 8945–9003 (AMEA…VEQL), 9071–9129 (AMQA…VEQL), 9197–9255 (AMET…VDQA), 9323–9377 (SMDQ…VDQA), 9445–9504 (VMDQ…VIKL), and 9699–9755 (AMET…INGA). Residues 7066–7080 (DNATTKQNQNYTDSS) show a composition bias toward polar residues. Positions 7066–7085 (DNATTKQNQNYTDSSPNKKD) are disordered. Over residues 10492 to 10507 (DHSKPSSNSDGQSNSH) the composition is skewed to polar residues. A disordered region spans residues 10492-10530 (DHSKPSSNSDGQSNSHLHVGYGTVNHPFNSSPIGHKKKL). Residues 10552 to 10572 (IKNALGVVGISGLLASFWFFI) traverse the membrane as a helical segment. The tract at residues 10649–10746 (RRKEDEEDVE…KKKKSKKNKK (98 aa)) is disordered. Over residues 10664–10674 (TDEKVLQDNEH) the composition is skewed to basic and acidic residues. Basic residues predominate over residues 10719–10746 (KGKKSASKKPSKKVAAKKKKKKSKKNKK).

It localises to the cell membrane. The protein is Extracellular matrix-binding protein ebh (ebh) of Staphylococcus aureus (strain MRSA252).